The chain runs to 375 residues: Queuine tRNA-ribosyltransferase (375 aa).

Asp89 functions as the Proton acceptor in the catalytic mechanism. Residues 89-93 (DSGGF), Asp143, Gln187, and Gly214 each bind substrate. An RNA binding region spans residues 245 to 251 (GVGKPED). Asp264 acts as the Nucleophile in catalysis. Positions 269 to 273 (TRNAR) are RNA binding; important for wobble base 34 recognition. Residues Cys302, Cys304, Cys307, and His333 each contribute to the Zn(2+) site.

It belongs to the queuine tRNA-ribosyltransferase family. Homodimer. Within each dimer, one monomer is responsible for RNA recognition and catalysis, while the other monomer binds to the replacement base PreQ1. Requires Zn(2+) as cofactor.

The catalysed reaction is 7-aminomethyl-7-carbaguanine + guanosine(34) in tRNA = 7-aminomethyl-7-carbaguanosine(34) in tRNA + guanine. It participates in tRNA modification; tRNA-queuosine biosynthesis. Functionally, catalyzes the base-exchange of a guanine (G) residue with the queuine precursor 7-aminomethyl-7-deazaguanine (PreQ1) at position 34 (anticodon wobble position) in tRNAs with GU(N) anticodons (tRNA-Asp, -Asn, -His and -Tyr). Catalysis occurs through a double-displacement mechanism. The nucleophile active site attacks the C1' of nucleotide 34 to detach the guanine base from the RNA, forming a covalent enzyme-RNA intermediate. The proton acceptor active site deprotonates the incoming PreQ1, allowing a nucleophilic attack on the C1' of the ribose to form the product. After dissociation, two additional enzymatic reactions on the tRNA convert PreQ1 to queuine (Q), resulting in the hypermodified nucleoside queuosine (7-(((4,5-cis-dihydroxy-2-cyclopenten-1-yl)amino)methyl)-7-deazaguanosine). This Aliivibrio fischeri (strain ATCC 700601 / ES114) (Vibrio fischeri) protein is Queuine tRNA-ribosyltransferase.